The chain runs to 527 residues: Protein disulfide-isomerase A2 (527 aa).

The N-terminal stretch at 1-20 (MDKQLLPVLLLLLGVSGSWG) is a signal peptide. A disordered region spans residues 20–41 (GQGEEPGGPSEVLPEEPTGEEV). The 127-residue stretch at 29 to 155 (SEVLPEEPTG…IAEWLRRRVG (127 aa)) folds into the Thioredoxin 1 domain. Active-site nucleophile residues include Cys-74 and Cys-77. An intrachain disulfide couples Cys-74 to Cys-77. Asn-130 and Asn-287 each carry an N-linked (GlcNAc...) asparagine glycan. The region spanning 355 to 499 (VIAITAASVA…FSKFLDSGGH (145 aa)) is the Thioredoxin 2 domain. Catalysis depends on nucleophile residues Cys-421 and Cys-424. Cys-421 and Cys-424 form a disulfide bridge. Residues 495–527 (DSGGHLPKEEPKEPAASAPEAQANSTLGPKEEL) form a disordered region. N-linked (GlcNAc...) asparagine glycosylation is present at Asn-518. A Prevents secretion from ER motif is present at residues 524–527 (KEEL).

This sequence belongs to the protein disulfide isomerase family. Part of a large chaperone multiprotein complex comprising DNAJB11, HSP90B1, HSPA5, HYOU, PDIA2, PDIA4, PDIA6, PPIB, SDF2L1, UGGT1 and very small amounts of ERP29, but not, or at very low levels, CALR nor CANX. In terms of processing, glycosylated. In terms of tissue distribution, highly expressed in pancreas.

The protein localises to the endoplasmic reticulum lumen. The catalysed reaction is Catalyzes the rearrangement of -S-S- bonds in proteins.. Functionally, acts as an intracellular estrogen-binding protein. May be involved in modulating cellular levels and biological functions of estrogens in the pancreas. May act as a chaperone that inhibits aggregation of misfolded proteins. The protein is Protein disulfide-isomerase A2 of Mus musculus (Mouse).